The primary structure comprises 435 residues: Methylenetetrahydrofolate--tRNA-(uracil-5-)-methyltransferase TrmFO (435 aa).

Position 10–15 (10–15 (GAGLAG)) interacts with FAD.

This sequence belongs to the MnmG family. TrmFO subfamily. FAD serves as cofactor.

It localises to the cytoplasm. It carries out the reaction uridine(54) in tRNA + (6R)-5,10-methylene-5,6,7,8-tetrahydrofolate + NADH + H(+) = 5-methyluridine(54) in tRNA + (6S)-5,6,7,8-tetrahydrofolate + NAD(+). The enzyme catalyses uridine(54) in tRNA + (6R)-5,10-methylene-5,6,7,8-tetrahydrofolate + NADPH + H(+) = 5-methyluridine(54) in tRNA + (6S)-5,6,7,8-tetrahydrofolate + NADP(+). Its function is as follows. Catalyzes the folate-dependent formation of 5-methyl-uridine at position 54 (M-5-U54) in all tRNAs. The polypeptide is Methylenetetrahydrofolate--tRNA-(uracil-5-)-methyltransferase TrmFO (Halalkalibacterium halodurans (strain ATCC BAA-125 / DSM 18197 / FERM 7344 / JCM 9153 / C-125) (Bacillus halodurans)).